We begin with the raw amino-acid sequence, 393 residues long: Phosphopentomutase (393 aa).

Residues Asp15, Asp288, His293, Asp329, His330, and His341 each coordinate Mn(2+).

This sequence belongs to the phosphopentomutase family. Requires Mn(2+) as cofactor.

Its subcellular location is the cytoplasm. It carries out the reaction 2-deoxy-alpha-D-ribose 1-phosphate = 2-deoxy-D-ribose 5-phosphate. The catalysed reaction is alpha-D-ribose 1-phosphate = D-ribose 5-phosphate. It functions in the pathway carbohydrate degradation; 2-deoxy-D-ribose 1-phosphate degradation; D-glyceraldehyde 3-phosphate and acetaldehyde from 2-deoxy-alpha-D-ribose 1-phosphate: step 1/2. In terms of biological role, isomerase that catalyzes the conversion of deoxy-ribose 1-phosphate (dRib-1-P) and ribose 1-phosphate (Rib-1-P) to deoxy-ribose 5-phosphate (dRib-5-P) and ribose 5-phosphate (Rib-5-P), respectively. In Halalkalibacterium halodurans (strain ATCC BAA-125 / DSM 18197 / FERM 7344 / JCM 9153 / C-125) (Bacillus halodurans), this protein is Phosphopentomutase.